The sequence spans 229 residues: ATP-dependent dethiobiotin synthetase BioD (229 aa).

An ATP-binding site is contributed by 12–17; the sequence is GVGKTV. Thr-16 contacts Mg(2+). Lys-37 is an active-site residue. Thr-41 lines the substrate pocket. Residues Asp-53, 112 to 115, and 201 to 203 contribute to the ATP site; these read EGAG and PAG. Asp-53 and Glu-112 together coordinate Mg(2+).

This sequence belongs to the dethiobiotin synthetase family. Homodimer. Mg(2+) serves as cofactor.

Its subcellular location is the cytoplasm. It carries out the reaction (7R,8S)-7,8-diammoniononanoate + CO2 + ATP = (4R,5S)-dethiobiotin + ADP + phosphate + 3 H(+). Its pathway is cofactor biosynthesis; biotin biosynthesis; biotin from 7,8-diaminononanoate: step 1/2. Its function is as follows. Catalyzes a mechanistically unusual reaction, the ATP-dependent insertion of CO2 between the N7 and N8 nitrogen atoms of 7,8-diaminopelargonic acid (DAPA, also called 7,8-diammoniononanoate) to form a ureido ring. The chain is ATP-dependent dethiobiotin synthetase BioD from Mycobacterium sp. (strain JLS).